An 85-amino-acid polypeptide reads, in one-letter code: ATP synthase epsilon chain (85 aa).

Belongs to the ATPase epsilon chain family. In terms of assembly, F-type ATPases have 2 components, CF(1) - the catalytic core - and CF(0) - the membrane proton channel. CF(1) has five subunits: alpha(3), beta(3), gamma(1), delta(1), epsilon(1). CF(0) has three main subunits: a, b and c.

It localises to the cell membrane. Functionally, produces ATP from ADP in the presence of a proton gradient across the membrane. The sequence is that of ATP synthase epsilon chain from Frankia casuarinae (strain DSM 45818 / CECT 9043 / HFP020203 / CcI3).